Reading from the N-terminus, the 89-residue chain is Small ribosomal subunit protein uS15 (89 aa).

Belongs to the universal ribosomal protein uS15 family. Part of the 30S ribosomal subunit. Forms a bridge to the 50S subunit in the 70S ribosome, contacting the 23S rRNA.

One of the primary rRNA binding proteins, it binds directly to 16S rRNA where it helps nucleate assembly of the platform of the 30S subunit by binding and bridging several RNA helices of the 16S rRNA. In terms of biological role, forms an intersubunit bridge (bridge B4) with the 23S rRNA of the 50S subunit in the ribosome. The chain is Small ribosomal subunit protein uS15 from Solibacter usitatus (strain Ellin6076).